A 508-amino-acid chain; its full sequence is Photosystem II CP47 reaction center protein (508 aa).

Transmembrane regions (helical) follow at residues 21 to 36, 101 to 115, 140 to 156, 203 to 218, 237 to 252, and 457 to 472; these read SVHI…WAGS, IVFS…IWHW, GIHL…FGAF, IAAG…FHLS, VLSS…AFVV, and SFAL…HGAR.

This sequence belongs to the PsbB/PsbC family. PsbB subfamily. As to quaternary structure, PSII is composed of 1 copy each of membrane proteins PsbA, PsbB, PsbC, PsbD, PsbE, PsbF, PsbH, PsbI, PsbJ, PsbK, PsbL, PsbM, PsbT, PsbX, PsbY, PsbZ, Psb30/Ycf12, at least 3 peripheral proteins of the oxygen-evolving complex and a large number of cofactors. It forms dimeric complexes. Binds multiple chlorophylls. PSII binds additional chlorophylls, carotenoids and specific lipids. serves as cofactor.

The protein resides in the plastid. The protein localises to the chloroplast thylakoid membrane. Functionally, one of the components of the core complex of photosystem II (PSII). It binds chlorophyll and helps catalyze the primary light-induced photochemical processes of PSII. PSII is a light-driven water:plastoquinone oxidoreductase, using light energy to abstract electrons from H(2)O, generating O(2) and a proton gradient subsequently used for ATP formation. In Acorus calamus var. americanus (American sweet flag), this protein is Photosystem II CP47 reaction center protein.